Consider the following 389-residue polypeptide: 8-amino-7-oxononanoate synthase 2 (389 aa).

Position 21 (R21) interacts with substrate. A pyridoxal 5'-phosphate-binding site is contributed by 108–109; that stretch reads GY. Substrate is bound at residue H133. Pyridoxal 5'-phosphate is bound by residues S180, 205–208, and 234–237; these read DDAH and TLSK. K237 is subject to N6-(pyridoxal phosphate)lysine. Position 351 (T351) interacts with substrate.

It belongs to the class-II pyridoxal-phosphate-dependent aminotransferase family. BioF subfamily. In terms of assembly, homodimer. Requires pyridoxal 5'-phosphate as cofactor.

The enzyme catalyses 6-carboxyhexanoyl-[ACP] + L-alanine + H(+) = (8S)-8-amino-7-oxononanoate + holo-[ACP] + CO2. Its pathway is cofactor biosynthesis; biotin biosynthesis. Catalyzes the decarboxylative condensation of pimeloyl-[acyl-carrier protein] and L-alanine to produce 8-amino-7-oxononanoate (AON), [acyl-carrier protein], and carbon dioxide. The chain is 8-amino-7-oxononanoate synthase 2 (bioF) from Bacillus subtilis (strain 168).